A 142-amino-acid chain; its full sequence is Large ribosomal subunit protein uL13 (142 aa).

This sequence belongs to the universal ribosomal protein uL13 family. Part of the 50S ribosomal subunit.

In terms of biological role, this protein is one of the early assembly proteins of the 50S ribosomal subunit, although it is not seen to bind rRNA by itself. It is important during the early stages of 50S assembly. In Vibrio cholerae serotype O1 (strain M66-2), this protein is Large ribosomal subunit protein uL13.